The sequence spans 465 residues: Trigger factor (465 aa).

The PPIase FKBP-type domain maps to 164–245 (GDFVSIDLSA…VQSVKERELP (82 aa)). Residues 430 to 465 (GNTVDTAEMFGEPAAEPEQADAAQAGDAEKAAADSE) are disordered. The span at 440–455 (GEPAAEPEQADAAQAG) shows a compositional bias: low complexity. Basic and acidic residues predominate over residues 456–465 (DAEKAAADSE).

Belongs to the FKBP-type PPIase family. Tig subfamily.

Its subcellular location is the cytoplasm. The enzyme catalyses [protein]-peptidylproline (omega=180) = [protein]-peptidylproline (omega=0). Functionally, involved in protein export. Acts as a chaperone by maintaining the newly synthesized protein in an open conformation. Functions as a peptidyl-prolyl cis-trans isomerase. This chain is Trigger factor, found in Nocardia farcinica (strain IFM 10152).